The following is a 267-amino-acid chain: Type III pantothenate kinase (267 aa).

6 to 13 (DSGNSRLK) contacts ATP. Residues Tyr-96 and 103–106 (GADR) contribute to the substrate site. The active-site Proton acceptor is the Asp-105. Thr-131 is a binding site for ATP. Residue Thr-181 participates in substrate binding.

This sequence belongs to the type III pantothenate kinase family. As to quaternary structure, homodimer. The cofactor is NH4(+). Requires K(+) as cofactor.

The protein resides in the cytoplasm. It carries out the reaction (R)-pantothenate + ATP = (R)-4'-phosphopantothenate + ADP + H(+). It participates in cofactor biosynthesis; coenzyme A biosynthesis; CoA from (R)-pantothenate: step 1/5. Functionally, catalyzes the phosphorylation of pantothenate (Pan), the first step in CoA biosynthesis. In terms of biological role, activates transcription of the pertussis toxin operon in a BvgAS-dependent manner. May interact with the alpha subunit of RNA polymerase. In Bordetella pertussis (strain Tohama I / ATCC BAA-589 / NCTC 13251), this protein is Type III pantothenate kinase (coaX).